Reading from the N-terminus, the 392-residue chain is Formate-dependent phosphoribosylglycinamide formyltransferase (392 aa).

N(1)-(5-phospho-beta-D-ribosyl)glycinamide-binding positions include 22 to 23 (EL) and Glu82. ATP contacts are provided by residues Arg114, Lys155, 160–165 (SSGHGQ), 195–198 (EGFI), and Glu203. The ATP-grasp domain occupies 119 to 307 (RLAAEELGLK…QFALHARAIL (189 aa)). Positions 266 and 278 each coordinate Mg(2+). N(1)-(5-phospho-beta-D-ribosyl)glycinamide is bound by residues Asp285, Lys355, and 362–363 (RR).

This sequence belongs to the PurK/PurT family. In terms of assembly, homodimer.

It localises to the cell inner membrane. The enzyme catalyses N(1)-(5-phospho-beta-D-ribosyl)glycinamide + formate + ATP = N(2)-formyl-N(1)-(5-phospho-beta-D-ribosyl)glycinamide + ADP + phosphate + H(+). It functions in the pathway purine metabolism; IMP biosynthesis via de novo pathway; N(2)-formyl-N(1)-(5-phospho-D-ribosyl)glycinamide from N(1)-(5-phospho-D-ribosyl)glycinamide (formate route): step 1/1. Involved in the de novo purine biosynthesis. Catalyzes the transfer of formate to 5-phospho-ribosyl-glycinamide (GAR), producing 5-phospho-ribosyl-N-formylglycinamide (FGAR). Formate is provided by PurU via hydrolysis of 10-formyl-tetrahydrofolate. The polypeptide is Formate-dependent phosphoribosylglycinamide formyltransferase (Mannheimia haemolytica (Pasteurella haemolytica)).